Here is a 174-residue protein sequence, read N- to C-terminus: Probable N-acetyltransferase Rv2775 (174 aa).

The region spanning 6 to 172 (IRIRAAKPID…VGYRLYRSAP (167 aa)) is the N-acetyltransferase domain.

The protein belongs to the acetyltransferase family.

The protein is Probable N-acetyltransferase Rv2775 of Mycobacterium tuberculosis (strain ATCC 25618 / H37Rv).